A 339-amino-acid polypeptide reads, in one-letter code: MLKAQISKVVAGQHLSEAEAAEAMDIIMAGEATPAQIAAFLTALRLKGEMVDEITGFARSMRRRAIPLTTSHPVFVDTCGTGGDGRQTFNISTTAAFVVAGAGVAVAKHGNRSVSSRCGSADMLEALGIKVDLPPDAVARCLDEVGMAFLFAPVFHGAMKYAAGPRREIGIRTAFNLLGPLTNPAGAPCQLVGVYDPDLTETVAAVLGRLGSRRAYVVHGSDGLDEVTITGPSKITCLDKGAIRTYTFTPEDVGLPRANLADLAGGTATDNAAIARAVLSGTRGPARDVVLINAAFALLAAGAADTLQQALALAESSIDSGAAAAKLQAMVAWVESWAA.

5-phospho-alpha-D-ribose 1-diphosphate contacts are provided by residues G80, 83-84 (GD), T88, 90-93 (NIST), 108-116 (KHGNRSVSS), and S120. G80 serves as a coordination point for anthranilate. S92 serves as a coordination point for Mg(2+). N111 serves as a coordination point for anthranilate. R166 lines the anthranilate pocket. Residues D225 and E226 each contribute to the Mg(2+) site.

It belongs to the anthranilate phosphoribosyltransferase family. In terms of assembly, homodimer. Mg(2+) is required as a cofactor.

The enzyme catalyses N-(5-phospho-beta-D-ribosyl)anthranilate + diphosphate = 5-phospho-alpha-D-ribose 1-diphosphate + anthranilate. Its pathway is amino-acid biosynthesis; L-tryptophan biosynthesis; L-tryptophan from chorismate: step 2/5. Functionally, catalyzes the transfer of the phosphoribosyl group of 5-phosphorylribose-1-pyrophosphate (PRPP) to anthranilate to yield N-(5'-phosphoribosyl)-anthranilate (PRA). This chain is Anthranilate phosphoribosyltransferase, found in Moorella thermoacetica (strain ATCC 39073 / JCM 9320).